Here is a 184-residue protein sequence, read N- to C-terminus: TATA-box-binding protein (184 aa).

2 tandem repeats follow at residues 9-85 and 100-178.

The protein belongs to the TBP family.

Its function is as follows. General factor that plays a role in the activation of archaeal genes transcribed by RNA polymerase. Binds specifically to the TATA box promoter element which lies close to the position of transcription initiation. This Picrophilus torridus (strain ATCC 700027 / DSM 9790 / JCM 10055 / NBRC 100828 / KAW 2/3) protein is TATA-box-binding protein.